Reading from the N-terminus, the 182-residue chain is Oligoribonuclease (182 aa).

Residues 8-171 (LIWIDLEMTG…DDIRESIKEL (164 aa)) enclose the Exonuclease domain. Residue Tyr129 is part of the active site.

Belongs to the oligoribonuclease family.

The protein localises to the cytoplasm. 3'-to-5' exoribonuclease specific for small oligoribonucleotides. In Actinobacillus succinogenes (strain ATCC 55618 / DSM 22257 / CCUG 43843 / 130Z), this protein is Oligoribonuclease.